The following is a 494-amino-acid chain: Ketol-acid reductoisomerase (NADP(+)) (494 aa).

Residues 14 to 208 (LDQLGRCRFM…GGHRAGCLES (195 aa)) enclose the KARI N-terminal Rossmann domain. Residues 45 to 48 (CGAQ), arginine 68, arginine 76, serine 78, and 108 to 110 (DKQ) contribute to the NADP(+) site. Histidine 132 is a catalytic residue. Glycine 158 lines the NADP(+) pocket. 2 KARI C-terminal knotted domains span residues 209–344 (SFVA…NYPD) and 345–487 (SSLE…MTDM). Residues aspartate 217, glutamate 221, glutamate 389, and glutamate 393 each coordinate Mg(2+). Serine 414 contributes to the substrate binding site.

This sequence belongs to the ketol-acid reductoisomerase family. The cofactor is Mg(2+).

The catalysed reaction is (2R)-2,3-dihydroxy-3-methylbutanoate + NADP(+) = (2S)-2-acetolactate + NADPH + H(+). The enzyme catalyses (2R,3R)-2,3-dihydroxy-3-methylpentanoate + NADP(+) = (S)-2-ethyl-2-hydroxy-3-oxobutanoate + NADPH + H(+). Its pathway is amino-acid biosynthesis; L-isoleucine biosynthesis; L-isoleucine from 2-oxobutanoate: step 2/4. The protein operates within amino-acid biosynthesis; L-valine biosynthesis; L-valine from pyruvate: step 2/4. Functionally, involved in the biosynthesis of branched-chain amino acids (BCAA). Catalyzes an alkyl-migration followed by a ketol-acid reduction of (S)-2-acetolactate (S2AL) to yield (R)-2,3-dihydroxy-isovalerate. In the isomerase reaction, S2AL is rearranged via a Mg-dependent methyl migration to produce 3-hydroxy-3-methyl-2-ketobutyrate (HMKB). In the reductase reaction, this 2-ketoacid undergoes a metal-dependent reduction by NADPH to yield (R)-2,3-dihydroxy-isovalerate. This Aliivibrio salmonicida (strain LFI1238) (Vibrio salmonicida (strain LFI1238)) protein is Ketol-acid reductoisomerase (NADP(+)).